The chain runs to 188 residues: dTTP/UTP pyrophosphatase (188 aa).

The active-site Proton acceptor is the Asp67.

It belongs to the Maf family. YhdE subfamily. A divalent metal cation serves as cofactor.

It is found in the cytoplasm. The catalysed reaction is dTTP + H2O = dTMP + diphosphate + H(+). It carries out the reaction UTP + H2O = UMP + diphosphate + H(+). Nucleoside triphosphate pyrophosphatase that hydrolyzes dTTP and UTP. May have a dual role in cell division arrest and in preventing the incorporation of modified nucleotides into cellular nucleic acids. The chain is dTTP/UTP pyrophosphatase from Thermococcus kodakarensis (strain ATCC BAA-918 / JCM 12380 / KOD1) (Pyrococcus kodakaraensis (strain KOD1)).